The sequence spans 465 residues: Glutamate--tRNA ligase (465 aa).

The short motif at 11-21 (PSPTGYLHIGG) is the 'HIGH' region element. Positions 243–247 (KLSKR) match the 'KMSKS' region motif. An ATP-binding site is contributed by Lys246.

Belongs to the class-I aminoacyl-tRNA synthetase family. Glutamate--tRNA ligase type 1 subfamily. As to quaternary structure, monomer.

The protein resides in the cytoplasm. The catalysed reaction is tRNA(Glu) + L-glutamate + ATP = L-glutamyl-tRNA(Glu) + AMP + diphosphate. Catalyzes the attachment of glutamate to tRNA(Glu) in a two-step reaction: glutamate is first activated by ATP to form Glu-AMP and then transferred to the acceptor end of tRNA(Glu). This chain is Glutamate--tRNA ligase, found in Aromatoleum aromaticum (strain DSM 19018 / LMG 30748 / EbN1) (Azoarcus sp. (strain EbN1)).